Consider the following 232-residue polypeptide: MTRPQAILTDIEGTTSSISFVKDVLFPYARRAMPAYVREHGGHPQVRHWLNQVADEIGEDVPDEVLITTLQTWIDEDRKHTALKALQGMIWEDGYRTADFSAHIYADAAIQLQAWHAEGIPLYVYSSGSVPAQKLFFAHSDAGDLSGLVSDWFDTEVGPKRESSSYRRIAERIGVPAPEILFLSDVIEELDAAKRAGMRTALLDRLEDYPTPRSADDVGSHQRVESFTQLVL.

Belongs to the HAD-like hydrolase superfamily. MasA/MtnC family. In terms of assembly, monomer. Requires Mg(2+) as cofactor.

The enzyme catalyses 5-methylsulfanyl-2,3-dioxopentyl phosphate + H2O = 1,2-dihydroxy-5-(methylsulfanyl)pent-1-en-3-one + phosphate. It participates in amino-acid biosynthesis; L-methionine biosynthesis via salvage pathway; L-methionine from S-methyl-5-thio-alpha-D-ribose 1-phosphate: step 3/6. Its pathway is amino-acid biosynthesis; L-methionine biosynthesis via salvage pathway; L-methionine from S-methyl-5-thio-alpha-D-ribose 1-phosphate: step 4/6. Its function is as follows. Bifunctional enzyme that catalyzes the enolization of 2,3-diketo-5-methylthiopentyl-1-phosphate (DK-MTP-1-P) into the intermediate 2-hydroxy-3-keto-5-methylthiopentenyl-1-phosphate (HK-MTPenyl-1-P), which is then dephosphorylated to form the acireductone 1,2-dihydroxy-3-keto-5-methylthiopentene (DHK-MTPene). The chain is Enolase-phosphatase E1 from Xanthomonas campestris pv. campestris (strain B100).